A 96-amino-acid chain; its full sequence is Ribonuclease P protein component 1 (96 aa).

It belongs to the eukaryotic/archaeal RNase P protein component 1 family. As to quaternary structure, consists of a catalytic RNA component and at least 5 protein subunits.

The protein resides in the cytoplasm. The enzyme catalyses Endonucleolytic cleavage of RNA, removing 5'-extranucleotides from tRNA precursor.. Part of ribonuclease P, a protein complex that generates mature tRNA molecules by cleaving their 5'-ends. The chain is Ribonuclease P protein component 1 from Methanococcus maripaludis (strain DSM 14266 / JCM 13030 / NBRC 101832 / S2 / LL).